A 1288-amino-acid chain; its full sequence is Peroxidasin homolog (1288 aa).

An N-terminal signal peptide occupies residues 1 to 16; the sequence is MNLLLYLLLLVPWVLG. The region spanning 17 to 51 is the LRRNT domain; sequence SEDGCPAKCTCDKKGFTVDCSNAGLTRIPKGISSN. 7 LRR repeats span residues 27-49, 50-72, 73-96, 97-120, 122-143, 145-168, and 204-227; these read CDKK…KGIS, SNVR…DLEG, FPLL…ILDH, LPEL…ASES, PLAS…WLLQ, FPEL…LFEN, and AYCT…LLKC. The LRRCT domain maps to 180–228; it reads NPWNCDCRVTKVKALLRKVEWERKAYCTNPVELRHQAIDEVEESLLKCA. Asn247 carries N-linked (GlcNAc...) asparagine glycosylation. Positions 304–323 are disordered; it reads LRQSHHSNGAPQFTYKPRDN. 2 Ig-like C2-type domains span residues 314 to 400 and 407 to 494; these read PQFT…FSLD and PNIY…AKLT. Cys335 and Cys384 are disulfide-bonded. LRR repeat units lie at residues 356 to 381 and 387 to 412; these read SSRK…DSGR and VNSL…IYEG. A disulfide bond links Cys428 and Cys478. The N-linked (GlcNAc...) asparagine glycan is linked to Asn594. A disulfide bond links Cys624 and Cys640. Position 718 (Asp718) interacts with heme b. The active-site Proton acceptor is the His719. Asp720 is a binding site for Ca(2+). 2 disulfides stabilise this stretch: Cys739/Cys749 and Cys743/Cys770. N-linked (GlcNAc...) asparagine glycosylation occurs at Asn740. Positions 802, 804, 806, and 808 each coordinate Ca(2+). N-linked (GlcNAc...) asparagine glycosylation occurs at Asn857. 2 residues coordinate heme b: Glu876 and His972. LRR repeat units lie at residues 998 to 1022 and 1049 to 1073; these read KAFF…LFAS and SLDL…EYRQ. 2 disulfide bridges follow: Cys1075/Cys1132 and Cys1173/Cys1200. One copy of the LRR 12 repeat lies at 1168-1189; that stretch reads LARLLCDNGDEIDRIQKDVFMY.

The protein belongs to the peroxidase family. XPO subfamily. Requires Ca(2+) as cofactor. Heme b is required as a cofactor.

The protein localises to the secreted. It is found in the extracellular space. It localises to the extracellular matrix. It catalyses the reaction L-lysyl-[collagen] + L-methionyl-[collagen] + H2O2 = [collagen]-L-lysyl-N-S-L-methionyl-[collagen] + 2 H2O + H(+). The enzyme catalyses bromide + H2O2 = hypobromite + H2O. It carries out the reaction L-lysyl-[collagen] + L-methionyl-[collagen] + hypobromite = [collagen]-L-lysyl-N-S-L-methionyl-[collagen] + bromide + H2O + H(+). The catalysed reaction is L-tyrosyl-[protein] + bromide + H2O2 + H(+) = 3-bromo-L-tyrosyl-[protein] + 2 H2O. It catalyses the reaction hypobromite + L-tyrosyl-[protein] + H(+) = 3-bromo-L-tyrosyl-[protein] + H2O. Functionally, catalyzes the two-electron oxidation of bromide by hydrogen peroxide and generates hypobromite as a reactive intermediate which mediates the formation of sulfilimine cross-links between methionine and hydroxylysine residues within an uncross-linked collagen IV NC1 hexamer. Plays a role in the attachment of tissues and in axonal guidance during early developmental stages. May functionally antagonize the peroxidasin pxn-2 to maintain neuronal development. In Caenorhabditis briggsae, this protein is Peroxidasin homolog.